The primary structure comprises 300 residues: UDP-N-acetylenolpyruvoylglucosamine reductase (300 aa).

The 166-residue stretch at Lys28 to Gly193 folds into the FAD-binding PCMH-type domain. Arg172 is a catalytic residue. The active-site Proton donor is Ser222. Glu292 is an active-site residue.

The protein belongs to the MurB family. FAD is required as a cofactor.

The protein localises to the cytoplasm. It carries out the reaction UDP-N-acetyl-alpha-D-muramate + NADP(+) = UDP-N-acetyl-3-O-(1-carboxyvinyl)-alpha-D-glucosamine + NADPH + H(+). Its pathway is cell wall biogenesis; peptidoglycan biosynthesis. In terms of biological role, cell wall formation. The protein is UDP-N-acetylenolpyruvoylglucosamine reductase of Limosilactobacillus fermentum (strain NBRC 3956 / LMG 18251) (Lactobacillus fermentum).